The primary structure comprises 348 residues: Lipoyl synthase, mitochondrial (348 aa).

[4Fe-4S] cluster contacts are provided by C105, C110, C116, C136, C140, and C143. One can recognise a Radical SAM core domain in the interval 121-341; sequence ETGTATATIM…RTXXLVSYVL (221 aa).

This sequence belongs to the radical SAM superfamily. Lipoyl synthase family. [4Fe-4S] cluster serves as cofactor.

It is found in the mitochondrion. It catalyses the reaction [[Fe-S] cluster scaffold protein carrying a second [4Fe-4S](2+) cluster] + N(6)-octanoyl-L-lysyl-[protein] + 2 oxidized [2Fe-2S]-[ferredoxin] + 2 S-adenosyl-L-methionine + 4 H(+) = [[Fe-S] cluster scaffold protein] + N(6)-[(R)-dihydrolipoyl]-L-lysyl-[protein] + 4 Fe(3+) + 2 hydrogen sulfide + 2 5'-deoxyadenosine + 2 L-methionine + 2 reduced [2Fe-2S]-[ferredoxin]. The protein operates within protein modification; protein lipoylation via endogenous pathway; protein N(6)-(lipoyl)lysine from octanoyl-[acyl-carrier-protein]: step 2/2. Catalyzes the radical-mediated insertion of two sulfur atoms into the C-6 and C-8 positions of the octanoyl moiety bound to the lipoyl domains of lipoate-dependent enzymes, thereby converting the octanoylated domains into lipoylated derivatives. The protein is Lipoyl synthase, mitochondrial (LIP1) of Ricinus communis (Castor bean).